The chain runs to 668 residues: MSKDKALLRINQLKEQLNLWSKQYYVDDNPSVDDTEYDLALKELISLETLYPELITSDSPSQKVGGMVSEKFLKITHKTPMLSLGNVFSFDEFLDFNTQISKISNTLDNQYVAELKIDGLSISLVYENGSLVSAATRGNGVVGEDVTINARTIKSIPLKISKKERVEVRGEIYLSKAEFEKINQKRLLNNEDLFINPRNAAAGTLRQLDSKIVASRNLDAFLYYYISDDSNNLTQYQSILKLNELGFKTNKETMLCKNLDEIKAYIDKYTNLKNDLDYQIDGIVFKINDKNLQNSLGFTSKIPKWAIAYKFPAEIKQTKLLDIFATVGRTGKITYNAKLEPVFLMGAKISAATLNNAEYIKTKDLRINSIVKIKKAGDVIPEVIEAIKDEDFYKLEKFKPALYCPNCHSLLEKNENEVDQFCINSSCSMKILRSLQHFSSREAMNIVSLGDRSLEILFNLKIIQNISDIYKLEEYKDQILAIDNFGLKSYLNLIDSINMSKNNSLEKVLFGLGIRHIGSKTAKILARKYQNIDNLMSASYDELIQINSIGESLALSIIDWFKIEDNLKLIDELKSFNINFNYLGAKINSDSIIANKSFVITGTLTRPREEFKTLIENNAGKVIGSISKQTDYLLAGNNVGSKLEKAKKLGVKIIDEQQFFDLLKSEKG.

NAD(+)-binding positions include 34–38 (DTEYD), 83–84 (SL), and Glu-114. Residue Lys-116 is the N6-AMP-lysine intermediate of the active site. Residues Arg-137, Glu-171, Lys-286, and Lys-310 each contribute to the NAD(+) site. Positions 404, 407, 422, and 427 each coordinate Zn(2+). Residues 588-668 (NSDSIIANKS…FFDLLKSEKG (81 aa)) form the BRCT domain.

The protein belongs to the NAD-dependent DNA ligase family. LigA subfamily. Mg(2+) is required as a cofactor. Mn(2+) serves as cofactor.

It carries out the reaction NAD(+) + (deoxyribonucleotide)n-3'-hydroxyl + 5'-phospho-(deoxyribonucleotide)m = (deoxyribonucleotide)n+m + AMP + beta-nicotinamide D-nucleotide.. DNA ligase that catalyzes the formation of phosphodiester linkages between 5'-phosphoryl and 3'-hydroxyl groups in double-stranded DNA using NAD as a coenzyme and as the energy source for the reaction. It is essential for DNA replication and repair of damaged DNA. The polypeptide is DNA ligase (Mycoplasma mycoides subsp. mycoides SC (strain CCUG 32753 / NCTC 10114 / PG1)).